A 179-amino-acid chain; its full sequence is Peptide deformylase (179 aa).

The Fe cation site is built by cysteine 102 and histidine 144. Glutamate 145 is a catalytic residue. Histidine 148 serves as a coordination point for Fe cation.

The protein belongs to the polypeptide deformylase family. Requires Fe(2+) as cofactor.

The enzyme catalyses N-terminal N-formyl-L-methionyl-[peptide] + H2O = N-terminal L-methionyl-[peptide] + formate. Functionally, removes the formyl group from the N-terminal Met of newly synthesized proteins. Requires at least a dipeptide for an efficient rate of reaction. N-terminal L-methionine is a prerequisite for activity but the enzyme has broad specificity at other positions. In Wolbachia pipientis wMel, this protein is Peptide deformylase.